Consider the following 494-residue polypeptide: Tripartite motif-containing protein 5 (494 aa).

A2 is modified (N-acetylalanine). The RING-type zinc-finger motif lies at 15–59 (CPICLELLTEPLSLDCGHSFCQACITANHKESTLHQGERSCPLCR). S86 bears the Phosphoserine mark. The B box-type zinc finger occupies 91 to 132 (QKVDHCARHGEKLLLFCQQDGNVICWLCERSQEHRGHHTFLV). The Zn(2+) site is built by C96, H99, C118, and H124. The stretch at 132-223 (VEEVAEKYQG…RLVQSESDMV (92 aa)) forms a coiled coil. The tract at residues 186-199 (FKQLRDILDCEESK) is required for interaction with GABARAP and for autophagy. The B30.2/SPRY domain occupies 280-494 (PDLKGMLQAF…LPMTLCSPSS (215 aa)).

Belongs to the TRIM/RBCC family. In terms of assembly, can form homodimers and homotrimers. In addition to lower-order dimerization, also exhibits a higher-order multimerization and both low- and high-order multimerizations are essential for its restriction activity. Interacts with BTBD1 and BTBD2. Interacts with PSMC4, PSMC5, PSMD7 and HSPA8/HSC70. Interacts (via B30.2/SPRY domain) with HSPA1A/B. Interacts with PSMC2, MAP3K7/TAK1, TAB2 and TAB3. Interacts with SQSTM1. Interacts with TRIM6 and TRIM34. Interacts with ULK1 (phosphorylated form), GABARAP, GABARAPL1, GABARAPL2, MAP1LC3A, MAP1LC3C and BECN1. Degraded in a proteasome-independent fashion in the absence of viral infection but in a proteasome-dependent fashion following exposure to restriction sensitive virus. Post-translationally, autoubiquitinated in a RING finger- and UBE2D2-dependent manner. Monoubiquitinated by TRIM21. Deubiquitinated by Yersinia YopJ. Ubiquitination may not lead to proteasomal degradation.

It localises to the cytoplasm. It is found in the nucleus. It carries out the reaction S-ubiquitinyl-[E2 ubiquitin-conjugating enzyme]-L-cysteine + [acceptor protein]-L-lysine = [E2 ubiquitin-conjugating enzyme]-L-cysteine + N(6)-ubiquitinyl-[acceptor protein]-L-lysine.. The protein operates within protein modification; protein ubiquitination. Capsid-specific restriction factor that prevents infection from non-host-adapted retroviruses. Blocks viral replication early in the life cycle, after viral entry but before reverse transcription. In addition to acting as a capsid-specific restriction factor, also acts as a pattern recognition receptor that activates innate immune signaling in response to the retroviral capsid lattice. Binding to the viral capsid triggers its E3 ubiquitin ligase activity, and in concert with the heterodimeric ubiquitin conjugating enzyme complex UBE2V1-UBE2N (also known as UBC13-UEV1A complex) generates 'Lys-63'-linked polyubiquitin chains, which in turn are catalysts in the autophosphorylation of the MAP3K7/TAK1 complex (includes TAK1, TAB2, and TAB3). Activation of the MAP3K7/TAK1 complex by autophosphorylation results in the induction and expression of NF-kappa-B and MAPK-responsive inflammatory genes, thereby leading to an innate immune response in the infected cell. Plays a role in regulating autophagy through activation of autophagy regulator BECN1 by causing its dissociation from its inhibitors BCL2 and TAB2. The polypeptide is Tripartite motif-containing protein 5 (TRIM5) (Cebuella pygmaea (Pygmy marmoset)).